The following is a 222-amino-acid chain: Charged multivesicular body protein 3 (222 aa).

Residue glycine 2 is the site of N-myristoyl glycine attachment. Positions 2 to 113 (GLFGKTQEKP…LQKSTEVMKA (112 aa)) are intramolecular interaction with C-terminus. Residues 22–54 (KIRKEMRVVDRQIRDIQREEEKVKRSVKDAAKK) adopt a coiled-coil conformation. 2 important for autoinhibitory function regions span residues 59 to 64 (VCIVLA) and 168 to 169 (IL). The stretch at 141-222 (EEMLEDTFES…MQSRLATLRS (82 aa)) forms a coiled coil. The tract at residues 151-220 (MDDQEEMEEE…EAMQSRLATL (70 aa)) is intramolecular interaction with N-terminus. An interaction with VPS4A region spans residues 151-222 (MDDQEEMEEE…MQSRLATLRS (72 aa)). Residue lysine 179 forms a Glycyl lysine isopeptide (Lys-Gly) (interchain with G-Cter in ubiquitin) linkage. Residues 180 to 222 (APSKVTDALPEPEPPGAMAASEDEEEEEEALEAMQSRLATLRS) form a disordered region. At serine 200 the chain carries Phosphoserine. The segment covering 200 to 210 (SEDEEEEEEAL) has biased composition (acidic residues). Residues 201–211 (EDEEEEEEALE) carry the MIT-interacting motif motif. Interaction with STAMBP regions lie at residues 203–207 (EEEEE) and 221–222 (RS).

It belongs to the SNF7 family. As to quaternary structure, probable core component of the endosomal sorting required for transport complex III (ESCRT-III). ESCRT-III components are thought to multimerize to form a flat lattice on the perimeter membrane of the endosome. Several assembly forms of ESCRT-III may exist that interact and act sequentially. Forms a metastable monomer in solution; its core structure (without part of the putative autoinhibitory C-terminal acidic region) oligomerizes into a flat lattice via two different dimerization interfaces. In vitro, heteromerizes with CHMP2A (but not CHMP4) to form helical tubular structures that expose membrane-interacting sites on the outside whereas VPS4B can associate on the inside of the tubule. May interact with IGFBP7; the relevance of such interaction however remains unclear. Interacts with CHMP2A. Interacts with CHMP4A; the interaction requires the release of CHMP4A autoinhibition. Interacts with VPS4A. Interacts with STAMBP; the interaction appears to relieve the autoinhibition of CHMP3. Interacts with VTA1. Widely expressed. Expressed in heart, brain, placenta, lung, liver, skeletal muscle, kidney and pancreas.

The protein localises to the cytoplasm. It localises to the cytosol. It is found in the membrane. The protein resides in the endosome. Its subcellular location is the late endosome membrane. Its function is as follows. Probable core component of the endosomal sorting required for transport complex III (ESCRT-III) which is involved in multivesicular bodies (MVBs) formation and sorting of endosomal cargo proteins into MVBs. MVBs contain intraluminal vesicles (ILVs) that are generated by invagination and scission from the limiting membrane of the endosome and mostly are delivered to lysosomes enabling degradation of membrane proteins, such as stimulated growth factor receptors, lysosomal enzymes and lipids. The MVB pathway appears to require the sequential function of ESCRT-O, -I,-II and -III complexes. ESCRT-III proteins mostly dissociate from the invaginating membrane before the ILV is released. The ESCRT machinery also functions in topologically equivalent membrane fission events, such as the terminal stages of cytokinesis and the budding of enveloped viruses (HIV-1 and other lentiviruses). ESCRT-III proteins are believed to mediate the necessary vesicle extrusion and/or membrane fission activities, possibly in conjunction with the AAA ATPase VPS4. Selectively binds to phosphatidylinositol 3,5-bisphosphate PtdIns(3,5)P2 and PtdIns(3,4)P2 in preference to other phosphoinositides tested. Involved in late stages of cytokinesis. Plays a role in endosomal sorting/trafficking of EGF receptor. Isoform 2 prevents stress-mediated cell death and accumulation of reactive oxygen species when expressed in yeast cells. In Homo sapiens (Human), this protein is Charged multivesicular body protein 3 (CHMP3).